The primary structure comprises 423 residues: Glutamyl-tRNA reductase (423 aa).

Substrate-binding positions include 49-52, Ser106, 111-113, and Gln117; these read TCNR and EPQ. The active-site Nucleophile is the Cys50. NADP(+) is bound at residue 186-191; the sequence is GAGDTS.

It belongs to the glutamyl-tRNA reductase family. As to quaternary structure, homodimer.

It carries out the reaction (S)-4-amino-5-oxopentanoate + tRNA(Glu) + NADP(+) = L-glutamyl-tRNA(Glu) + NADPH + H(+). Its pathway is porphyrin-containing compound metabolism; protoporphyrin-IX biosynthesis; 5-aminolevulinate from L-glutamyl-tRNA(Glu): step 1/2. Its function is as follows. Catalyzes the NADPH-dependent reduction of glutamyl-tRNA(Glu) to glutamate 1-semialdehyde (GSA). The polypeptide is Glutamyl-tRNA reductase (Idiomarina loihiensis (strain ATCC BAA-735 / DSM 15497 / L2-TR)).